Here is a 119-residue protein sequence, read N- to C-terminus: Large ribosomal subunit protein uL18 (119 aa).

It belongs to the universal ribosomal protein uL18 family. In terms of assembly, part of the 50S ribosomal subunit; part of the 5S rRNA/L5/L18/L25 subcomplex. Contacts the 5S and 23S rRNAs.

In terms of biological role, this is one of the proteins that bind and probably mediate the attachment of the 5S RNA into the large ribosomal subunit, where it forms part of the central protuberance. The chain is Large ribosomal subunit protein uL18 from Anaeromyxobacter dehalogenans (strain 2CP-1 / ATCC BAA-258).